The following is a 412-amino-acid chain: Serine hydroxymethyltransferase (412 aa).

(6S)-5,6,7,8-tetrahydrofolate is bound by residues L117 and 121–123; that span reads GHL. At K226 the chain carries N6-(pyridoxal phosphate)lysine. E241 contributes to the (6S)-5,6,7,8-tetrahydrofolate binding site.

Belongs to the SHMT family. Homodimer. Pyridoxal 5'-phosphate serves as cofactor.

The protein resides in the cytoplasm. The enzyme catalyses (6R)-5,10-methylene-5,6,7,8-tetrahydrofolate + glycine + H2O = (6S)-5,6,7,8-tetrahydrofolate + L-serine. Its pathway is one-carbon metabolism; tetrahydrofolate interconversion. The protein operates within amino-acid biosynthesis; glycine biosynthesis; glycine from L-serine: step 1/1. Its function is as follows. Catalyzes the reversible interconversion of serine and glycine with tetrahydrofolate (THF) serving as the one-carbon carrier. This reaction serves as the major source of one-carbon groups required for the biosynthesis of purines, thymidylate, methionine, and other important biomolecules. Also exhibits THF-independent aldolase activity toward beta-hydroxyamino acids, producing glycine and aldehydes, via a retro-aldol mechanism. This is Serine hydroxymethyltransferase from Staphylococcus carnosus (strain TM300).